The primary structure comprises 84 residues: MIIKNGEGESKIIGKAITLPTPKIFPQPFFIRLSEYTSEGNLWDNENFEFNSGKVECNGEDYDLAPSTCSLAKFDEDDGSKKLI.

This sequence belongs to the csb family.

This is an uncharacterized protein from Dictyostelium discoideum (Social amoeba).